The following is a 148-amino-acid chain: Gag-Pol polyprotein (148 aa).

The Integrase catalytic domain occupies 1–64 (IPYNPQSQGV…SAGERIIDII (64 aa)). Glu-12 provides a ligand contact to Mg(2+). A DNA-binding region (integrase-type) is located at residues 83-130 (FRVYYRDSRDPIWKGPAKLLWKGEGAVVIQDNSDIKVVPRRKVKIIRD).

As to quaternary structure, homotetramer; may further associate as a homohexadecamer. Part of the pre-integration complex (PIC) which is composed of viral genome, matrix protein, Vpr and integrase. Interacts with human SMARCB1/INI1 and human PSIP1/LEDGF isoform 1. Interacts with human KPNA3; this interaction might play a role in nuclear import of the pre-integration complex. Interacts with human NUP153; this interaction might play a role in nuclear import of the pre-integration complex. Specific enzymatic cleavages by the viral protease yield mature proteins.

Its function is as follows. Catalyzes viral DNA integration into the host chromosome, by performing a series of DNA cutting and joining reactions. This enzyme activity takes place after virion entry into a cell and reverse transcription of the RNA genome in dsDNA. The first step in the integration process is 3' processing. This step requires a complex comprising the viral genome, matrix protein, Vpr and integrase. This complex is called the pre-integration complex (PIC). The integrase protein removes 2 nucleotides from each 3' end of the viral DNA, leaving recessed CA OH's at the 3' ends. In the second step, the PIC enters cell nucleus. This process is mediated through integrase and Vpr proteins, and allows the virus to infect a non dividing cell. This ability to enter the nucleus is specific of lentiviruses, other retroviruses cannot and rely on cell division to access cell chromosomes. In the third step, termed strand transfer, the integrase protein joins the previously processed 3' ends to the 5' ends of strands of target cellular DNA at the site of integration. The 5'-ends are produced by integrase-catalyzed staggered cuts, 5 bp apart. A Y-shaped, gapped, recombination intermediate results, with the 5'-ends of the viral DNA strands and the 3' ends of target DNA strands remaining unjoined, flanking a gap of 5 bp. The last step is viral DNA integration into host chromosome. This involves host DNA repair synthesis in which the 5 bp gaps between the unjoined strands are filled in and then ligated. Since this process occurs at both cuts flanking the HIV genome, a 5 bp duplication of host DNA is produced at the ends of HIV-1 integration. Alternatively, Integrase may catalyze the excision of viral DNA just after strand transfer, this is termed disintegration. The polypeptide is Gag-Pol polyprotein (gag-pol) (Homo sapiens (Human)).